The primary structure comprises 430 residues: Divergent protein kinase domain 2A (430 aa).

Residues 1-35 form the signal peptide; it reads MWRLVPLKLGRLSRALKLAALGSLLVLMLLHSPSL.

The protein belongs to the DIPK family. As to expression, expressed in heart, brain, liver, spleen, kidney, lung, thymus, testis, ovary and muscle.

It is found in the golgi apparatus. The protein localises to the cytoplasmic vesicle. It localises to the COPI-coated vesicle. The protein resides in the secreted. In terms of biological role, may play a role in cardiomyocyte proliferation through paracrine signaling and activation of the PI3-kinase signaling cascade. The polypeptide is Divergent protein kinase domain 2A (Dipk2a) (Mus musculus (Mouse)).